The sequence spans 507 residues: Histidine ammonia-lyase (507 aa).

The segment at residues 143-145 (SSG) is a cross-link (5-imidazolinone (Ser-Gly)). S144 is modified (2,3-didehydroalanine (Ser)).

Belongs to the PAL/histidase family. Contains an active site 4-methylidene-imidazol-5-one (MIO), which is formed autocatalytically by cyclization and dehydration of residues Ser-Ser-Gly.

The protein resides in the cytoplasm. It catalyses the reaction L-histidine = trans-urocanate + NH4(+). It functions in the pathway amino-acid degradation; L-histidine degradation into L-glutamate; N-formimidoyl-L-glutamate from L-histidine: step 1/3. This Alkaliphilus metalliredigens (strain QYMF) protein is Histidine ammonia-lyase.